Here is a 170-residue protein sequence, read N- to C-terminus: VIP peptides (170 aa).

The signal sequence occupies residues M1 to F20. Positions S21–A79 are excised as a propeptide. S76 is modified (phosphoserine). M107 is subject to Methionine amide. Residue N152 is modified to Asparagine amide. The propeptide occupies S156–K170.

This sequence belongs to the glucagon family.

The protein localises to the secreted. Functionally, VIP is a neuropeptide involved in a diverse array of physiological processes through activating the PACAP subfamily of class B1 G protein-coupled receptors: VIP receptor 1 (VPR1) and VIP receptor 2 (VPR2). Abundantly expressed throughout the CNS and peripheral nervous systems where they primarily exert neuroprotective and immune modulatory roles. Also causes vasodilation, lowers arterial blood pressure, stimulates myocardial contractility, increases glycogenolysis and relaxes the smooth muscle of trachea, stomach and gall bladder. Its function is as follows. PHM-27 and PHV-42 are two bioactive forms from proteolysis of the same precursor protein, that cause vasodilation. PHM-27 is a potent agonist of the calcitonin receptor CALCR, with similar efficacy as calcitonin. This chain is VIP peptides, found in Homo sapiens (Human).